Here is a 283-residue protein sequence, read N- to C-terminus: MAQTLAQTKQISQSHTFDVSQSHHKTPDDTNSHSVIYSTQNLDLWYGENHALQNINLDIYENQITAIIGPSGCGKSTYIKTLNRMVELVPSVKTAGKILYRDQDIFDQKYSKEQLRTNVGMVFQQPNPFPKSIYDNITYGPKIHGIKNKKVLDEIVEKSLRGAAIWDELKDRLHTNAYSLSGGQQQRVCIARCLAIEPEVILMDEPTSALDPISTLRVEELVQELKEKYTIIMVTHNMQQAARVSDKTAFFLNGYVNEYDDTDKIFSNPSNKKTEDYISGRFG.

The span at 1–20 (MAQTLAQTKQISQSHTFDVS) shows a compositional bias: polar residues. Positions 1–32 (MAQTLAQTKQISQSHTFDVSQSHHKTPDDTNS) are disordered. Residues 37 to 278 (YSTQNLDLWY…PSNKKTEDYI (242 aa)) enclose the ABC transporter domain. 69–76 (GPSGCGKS) is an ATP binding site.

The protein belongs to the ABC transporter superfamily. Phosphate importer (TC 3.A.1.7) family. In terms of assembly, the complex is composed of two ATP-binding proteins (PstB), two transmembrane proteins (PstC and PstA) and a solute-binding protein (PstS).

The protein localises to the cell membrane. It catalyses the reaction phosphate(out) + ATP + H2O = ADP + 2 phosphate(in) + H(+). Its function is as follows. Part of the ABC transporter complex PstSACB involved in phosphate import. Responsible for energy coupling to the transport system. The protein is Phosphate import ATP-binding protein PstB of Staphylococcus aureus (strain USA300).